A 1025-amino-acid chain; its full sequence is Multidrug resistance protein MdtC (1025 aa).

12 consecutive transmembrane segments (helical) span residues 15–35, 333–353, 360–380, 387–407, 431–451, 469–489, 528–548, 851–871, 875–895, 897–917, 953–973, and 984–1004; these read ILIS…LPVA, EVEQ…FLFL, LIPA…MYLC, LSLM…IVVL, VGFT…PLLL, VAIG…CGWL, LTGL…ISIP, AQVI…GVLY, VHPL…LLAL, IFDA…IGIV, PIMM…LSGG, and ITIV…TPVV.

This sequence belongs to the resistance-nodulation-cell division (RND) (TC 2.A.6) family. MdtC subfamily. In terms of assembly, part of a tripartite efflux system composed of MdtA, MdtB and MdtC. MdtC forms a heteromultimer with MdtB.

Its subcellular location is the cell inner membrane. The protein is Multidrug resistance protein MdtC of Klebsiella pneumoniae subsp. pneumoniae (strain ATCC 700721 / MGH 78578).